We begin with the raw amino-acid sequence, 400 residues long: PHD finger protein 24 (400 aa).

Gly-2 is lipidated: N-myristoyl glycine. Positions 29–38 (RDRPSIRRGG) are enriched in basic and acidic residues. Positions 29–65 (RDRPSIRRGGELPGSRRGTVEGSVQEVQEEKEAEASA) are disordered. Arg-36 is modified (omega-N-methylarginine). Ser-43 bears the Phosphoserine mark. The residue at position 47 (Thr-47) is a Phosphothreonine. Ser-51 bears the Phosphoserine mark. A PHD-type zinc finger spans residues 129–190 (NDEMCDVCEV…TGWSCYYCDN (62 aa)). Omega-N-methylarginine is present on Arg-307.

The sequence is that of PHD finger protein 24 from Mus musculus (Mouse).